An 859-amino-acid polypeptide reads, in one-letter code: Low-density lipoprotein receptor-related protein 12 (859 aa).

Residues 1–32 form the signal peptide; it reads MARRWSTKESPRWRSALLLLFLAGVYGNGALA. The Extracellular portion of the chain corresponds to 33–492; sequence EHSENVHISG…ENCPVIVPTR (460 aa). Cystine bridges form between C47–C76 and C103–C122. The 113-residue stretch at 47–159 folds into the CUB 1 domain; sequence CGETPEQIRA…KGFRLAYFSG (113 aa). The N-linked (GlcNAc...) asparagine glycan is linked to N75. N146 is a glycosylation site (N-linked (GlcNAc...) asparagine). LDL-receptor class A domains follow at residues 165-201 and 214-255; these read NCACDQFRCGNGKCIPEAWKCNNMDECGDSSDEEICA and PCAY…IDCD. 7 disulfide bridges follow: C166-C178, C173-C191, C185-C200, C215-C232, C222-C245, C239-C254, and C259-C285. The CUB 2 domain occupies 259-372; sequence CGQWLKYFYG…RGFNATYQVD (114 aa). N-linked (GlcNAc...) asparagine glycans are attached at residues N284 and N366. LDL-receptor class A domains are found at residues 374 to 411, 412 to 449, and 450 to 486; these read FCLPWEIPCGGNWGCYTEQQRCDGYWHCPNGRDEINCT, MCQKEEFPCSRNGVCYPRSDRCNYQNHCPNGSDEKNCF, and FCQPGNFHCKNNRCVFESWVCDSQDDCGDGSDEENCP. Cystine bridges form between C375-C388, C382-C401, C395-C410, C413-C426, C420-C439, C433-C448, C451-C463, C458-C476, and C470-C485. N-linked (GlcNAc...) asparagine glycosylation occurs at N409. N-linked (GlcNAc...) asparagine glycosylation occurs at N441. Residues 493 to 513 form a helical membrane-spanning segment; sequence VITAAVIGSLICGLLLVIALG. The Cytoplasmic segment spans residues 514 to 859; that stretch reads CTCKLYSLRM…TSDDEALLLC (346 aa). Disordered regions lie at residues 623 to 678, 693 to 723, 748 to 770, and 802 to 823; these read ADGD…LPQK, ASSSTQSTRGGHADNGRDVTSVEPPSVSPAR, SSVSQNQSPLRQLDNGVSGREDD, and QGQGLRQPYNATNPGVRPSNRD. 2 stretches are compositionally biased toward polar residues: residues 748–757 and 802–814; these read SSVSQNQSPL and QGQGLRQPYNATN.

It belongs to the LDLR family. May interact with RACK1, ZFYVE9 and NMRK2.

It localises to the membrane. The protein resides in the coated pit. In terms of biological role, probable receptor, which may be involved in the internalization of lipophilic molecules and/or signal transduction. May act as a tumor suppressor. The sequence is that of Low-density lipoprotein receptor-related protein 12 (LRP12) from Pongo abelii (Sumatran orangutan).